Reading from the N-terminus, the 261-residue chain is uncharacterized protein (261 aa).

The interval 1-22 (MAETTEPPSDAGTSQADAMALA) is disordered. Residues 107–127 (IAMAAAVVIICGFTGLSGYIV) traverse the membrane as a helical segment.

To M.tuberculosis Rv1362c.

The protein localises to the membrane. This is an uncharacterized protein from Mycobacterium tuberculosis (strain ATCC 25618 / H37Rv).